A 346-amino-acid chain; its full sequence is Selenide, water dikinase (346 aa).

Cysteine 15 is a catalytic residue. ATP contacts are provided by residues lysine 18 and 46-48; that span reads SKD. Aspartate 49 serves as a coordination point for Mg(2+). ATP is bound by residues aspartate 66, aspartate 89, and 137 to 139; that span reads GHS. Aspartate 89 contributes to the Mg(2+) binding site. Aspartate 225 provides a ligand contact to Mg(2+).

It belongs to the selenophosphate synthase 1 family. Class I subfamily. In terms of assembly, homodimer. It depends on Mg(2+) as a cofactor.

It carries out the reaction hydrogenselenide + ATP + H2O = selenophosphate + AMP + phosphate + 2 H(+). Functionally, synthesizes selenophosphate from selenide and ATP. This Photobacterium profundum (strain SS9) protein is Selenide, water dikinase.